Reading from the N-terminus, the 85-residue chain is Sec-independent protein translocase protein TatA (85 aa).

Residues 1-21 (MGSMSIWHWLVVGVLVLLLFG) traverse the membrane as a helical segment. A disordered region spans residues 39–85 (FKKGMSEEDEPTQPAEPRPTPRLQQQPPIEPNADPKLQPMQDDRPQH).

It belongs to the TatA/E family. As to quaternary structure, the Tat system comprises two distinct complexes: a TatABC complex, containing multiple copies of TatA, TatB and TatC subunits, and a separate TatA complex, containing only TatA subunits. Substrates initially bind to the TatABC complex, which probably triggers association of the separate TatA complex to form the active translocon.

It is found in the cell inner membrane. Its function is as follows. Part of the twin-arginine translocation (Tat) system that transports large folded proteins containing a characteristic twin-arginine motif in their signal peptide across membranes. TatA could form the protein-conducting channel of the Tat system. This Rhizorhabdus wittichii (strain DSM 6014 / CCUG 31198 / JCM 15750 / NBRC 105917 / EY 4224 / RW1) (Sphingomonas wittichii) protein is Sec-independent protein translocase protein TatA.